An 815-amino-acid chain; its full sequence is Phenylalanine--tRNA ligase beta subunit (815 aa).

Positions alanine 40–arginine 155 constitute a tRNA-binding domain. A B5 domain is found at proline 406–alanine 485. 4 residues coordinate Mg(2+): aspartate 463, aspartate 469, glutamate 472, and glutamate 473. Positions serine 712–arginine 814 constitute an FDX-ACB domain.

It belongs to the phenylalanyl-tRNA synthetase beta subunit family. Type 1 subfamily. As to quaternary structure, tetramer of two alpha and two beta subunits. Requires Mg(2+) as cofactor.

It is found in the cytoplasm. The enzyme catalyses tRNA(Phe) + L-phenylalanine + ATP = L-phenylalanyl-tRNA(Phe) + AMP + diphosphate + H(+). The chain is Phenylalanine--tRNA ligase beta subunit from Cupriavidus pinatubonensis (strain JMP 134 / LMG 1197) (Cupriavidus necator (strain JMP 134)).